A 122-amino-acid polypeptide reads, in one-letter code: MIDRLKKSISKTKRAERSRFKLKKLGSRPRLVFIKSNQYLSCQIIDDIQGVTLAYATTSEKTFTGEGKSKKDKGAAKVLGKLIAERGSQKGVKQVMLDRSGMIFHGRIAAFAEGAREAGLEF.

This sequence belongs to the universal ribosomal protein uL18 family. In terms of assembly, part of the 50S ribosomal subunit; part of the 5S rRNA/L5/L18/L25 subcomplex. Contacts the 5S and 23S rRNAs.

Functionally, this is one of the proteins that bind and probably mediate the attachment of the 5S RNA into the large ribosomal subunit, where it forms part of the central protuberance. This chain is Large ribosomal subunit protein uL18, found in Leptospira interrogans serogroup Icterohaemorrhagiae serovar copenhageni (strain Fiocruz L1-130).